We begin with the raw amino-acid sequence, 295 residues long: tRNA pseudouridine synthase A (295 aa).

Residue Asp-67 is the Nucleophile of the active site. Residue Tyr-125 coordinates substrate.

It belongs to the tRNA pseudouridine synthase TruA family. As to quaternary structure, homodimer.

The enzyme catalyses uridine(38/39/40) in tRNA = pseudouridine(38/39/40) in tRNA. Its function is as follows. Formation of pseudouridine at positions 38, 39 and 40 in the anticodon stem and loop of transfer RNAs. In Prochlorococcus marinus (strain MIT 9303), this protein is tRNA pseudouridine synthase A.